The chain runs to 504 residues: Maturase K (504 aa).

This sequence belongs to the intron maturase 2 family. MatK subfamily.

It is found in the plastid. It localises to the chloroplast. In terms of biological role, usually encoded in the trnK tRNA gene intron. Probably assists in splicing its own and other chloroplast group II introns. The protein is Maturase K of Pachira aquatica (Guiana chestnut).